The primary structure comprises 790 residues: Protein SEY1 (790 aa).

Over 1-692 (MELSEGELSH…KRSIVQHITQ (692 aa)) the chain is Cytoplasmic. Residues 55-284 (GNNYHIISVF…VNNELFKPEY (230 aa)) enclose the GB1/RHD3-type G domain. 65-72 (GSQSTGKS) contributes to the GTP binding site. The chain crosses the membrane as a helical span at residues 693–713 (IPYYIYLIILVLGWNEFMAII). The Lumenal segment spans residues 714–716 (RNP). The helical transmembrane segment at 717–737 (LFFSLSIVLGATVYVLYYLNL) threads the bilayer. Residues 738–790 (LKPAMLVAQRTMDEVIIMAKTKLREVLIDDHEVTGRQLNKIAGGKENIELDDM) lie on the Cytoplasmic side of the membrane.

Belongs to the TRAFAC class dynamin-like GTPase superfamily. GB1/RHD3 GTPase family. RHD3 subfamily.

The protein localises to the endoplasmic reticulum membrane. In terms of biological role, cooperates with the reticulon proteins and tubule-shaping DP1 family proteins to generate and maintain the structure of the tubular endoplasmic reticulum network. Has GTPase activity, which is required for its function in ER organization. The polypeptide is Protein SEY1 (Candida dubliniensis (strain CD36 / ATCC MYA-646 / CBS 7987 / NCPF 3949 / NRRL Y-17841) (Yeast)).